The primary structure comprises 317 residues: L-lactate dehydrogenase (317 aa).

Residues Val-17, Asp-38, Lys-43, Tyr-69, and 83–84 (GA) each bind NAD(+). Substrate contacts are provided by Gln-86 and Arg-92. NAD(+) contacts are provided by residues Ser-105, 122–124 (ATN), and Ser-147. 124 to 127 (NPVD) provides a ligand contact to substrate. 152–155 (DTAR) contacts substrate. Beta-D-fructose 1,6-bisphosphate-binding residues include Arg-157 and His-172. Residue His-179 is the Proton acceptor of the active site. Residue Tyr-224 is modified to Phosphotyrosine. Thr-233 is a substrate binding site.

Belongs to the LDH/MDH superfamily. LDH family. In terms of assembly, homotetramer.

The protein resides in the cytoplasm. It catalyses the reaction (S)-lactate + NAD(+) = pyruvate + NADH + H(+). The protein operates within fermentation; pyruvate fermentation to lactate; (S)-lactate from pyruvate: step 1/1. Allosterically activated by fructose 1,6-bisphosphate (FBP). Catalyzes the conversion of lactate to pyruvate. This is L-lactate dehydrogenase from Bacillus caldolyticus.